The following is a 371-amino-acid chain: DNA primase large subunit PriL (371 aa).

4 residues coordinate [4Fe-4S] cluster: Cys-230, Cys-301, Cys-310, and Cys-317. Residues Glu-337–Lys-371 are disordered.

It belongs to the eukaryotic-type primase large subunit family. In terms of assembly, heterodimer of a small subunit (PriS) and a large subunit (PriL). [4Fe-4S] cluster serves as cofactor.

In terms of biological role, regulatory subunit of DNA primase, an RNA polymerase that catalyzes the synthesis of short RNA molecules used as primers for DNA polymerase during DNA replication. Stabilizes and modulates the activity of the small subunit, increasing the rate of DNA synthesis, and conferring RNA synthesis capability. The DNA polymerase activity may enable DNA primase to also catalyze primer extension after primer synthesis. May also play a role in DNA repair. The sequence is that of DNA primase large subunit PriL from Methanosarcina acetivorans (strain ATCC 35395 / DSM 2834 / JCM 12185 / C2A).